A 470-amino-acid polypeptide reads, in one-letter code: Argininosuccinate lyase (470 aa).

Belongs to the lyase 1 family. Argininosuccinate lyase subfamily.

It localises to the cytoplasm. The catalysed reaction is 2-(N(omega)-L-arginino)succinate = fumarate + L-arginine. It functions in the pathway amino-acid biosynthesis; L-arginine biosynthesis; L-arginine from L-ornithine and carbamoyl phosphate: step 3/3. The sequence is that of Argininosuccinate lyase from Leptospira borgpetersenii serovar Hardjo-bovis (strain L550).